A 204-amino-acid chain; its full sequence is Linker for activation of T-cells family member 2 (204 aa).

Residues 1 to 7 (MNAELEL) are Extracellular-facing. A helical; Signal-anchor for type III membrane protein membrane pass occupies residues 8 to 28 (LWPLSGLLLLLLLGTTAWLCV). Residues Cys27 and Cys30 are each lipidated (S-palmitoyl cysteine). The Cytoplasmic portion of the chain corresponds to 29-204 (QCSRPGVKRN…NGDVATTEKI (176 aa)). Position 60 is a phosphotyrosine (Tyr60). 2 positions are modified to phosphoserine: Ser61 and Ser96. Phosphotyrosine occurs at positions 140, 161, and 193. The disordered stretch occupies residues 147 to 204 (KPSTPESGTEESEDYQNSVSILQWRESKRTMGARTSPSGSPDEEPDYVNGDVATTEKI).

When phosphorylated, interacts with GRB2. May also interact with SOS1, GAB1 and CBL. In terms of processing, phosphorylated on tyrosines following cross-linking of BCR in B-cells, high affinity IgG receptor (FCGR1) in myeloid cells, or high affinity IgE receptor (FCER1) in mast cells; which induces the recruitment of GRB2.

It is found in the cell membrane. Functionally, involved in FCER1 (high affinity immunoglobulin epsilon receptor)-mediated signaling in mast cells. May also be involved in BCR (B-cell antigen receptor)-mediated signaling in B-cells and FCGR1 (high affinity immunoglobulin gamma Fc receptor I)-mediated signaling in myeloid cells. Couples activation of these receptors and their associated kinases with distal intracellular events through the recruitment of GRB2. The sequence is that of Linker for activation of T-cells family member 2 (Lat2) from Rattus norvegicus (Rat).